Reading from the N-terminus, the 548-residue chain is MALAAAAAAAAAAAGVSQAAVLGFLREHGGQVRNSELLSRFKPLLDAGDPRGRAARRDRFKQFVNNVAVVKELDGVKFVVLRKKPRPPEGPEAPLPSSPGVPAALAQCAAVPAEDNCAPGAPHSPQRSGEPPEDSSAPSELQHTPETLPSEVTQVEAPSGSAPQPGGPEDPALPRSSELARPASVPSGLALTSTESPGPEPAPPTAQVPPQKPCMLPVRCVVPGPAALRIRAEEQGLRRQRSEEPSPRGSPMLLRRLSVEESGLGLHLGPGRSPHLRRLSRAGPRLLSPDTEEMPVAPLPSPAVPLEPTEHEWLVRTASGRWSHQLHGLLLRDRGLAAKRDFMSGFTALHWAAKNGDREMALQLVEVARRGGAPVDVNARSHGGYTPLHLAALHGHEDAAVLLVVRLGAQVHVRDYSGRRAYQYLRPGSSYALRRLLGDPGLRSMMEPDAASGGSGSLVSRHPVQVAATILSSTTSAFLGVLADDLMLQDLARGLKKSSSFSKFLGASPMAPRKKTKIRGGLPSFTEISHRSTPGPLAGLVPSLPPPT.

Residues 1 to 19 (MALAAAAAAAAAAAGVSQA) form the signal peptide. Residues 114 to 212 (EDNCAPGAPH…PPTAQVPPQK (99 aa)) form a disordered region. Residues 136 to 153 (SAPSELQHTPETLPSEVT) are compositionally biased toward polar residues. The segment covering 198–212 (GPEPAPPTAQVPPQK) has biased composition (pro residues). Serine 258 is modified (phosphoserine). ANK repeat units follow at residues 344–373 (SGFT…RGGA) and 383–413 (GGYT…QVHV). Positions 512–548 (PRKKTKIRGGLPSFTEISHRSTPGPLAGLVPSLPPPT) are disordered.

This sequence belongs to the SOWAH family.

This chain is Ankyrin repeat domain-containing protein SOWAHA (Sowaha), found in Mus musculus (Mouse).